The primary structure comprises 156 residues: Endoribonuclease YbeY (156 aa).

Zn(2+) is bound by residues His-122, His-126, and His-132.

The protein belongs to the endoribonuclease YbeY family. It depends on Zn(2+) as a cofactor.

It is found in the cytoplasm. Functionally, single strand-specific metallo-endoribonuclease involved in late-stage 70S ribosome quality control and in maturation of the 3' terminus of the 16S rRNA. This Bacillus mycoides (strain KBAB4) (Bacillus weihenstephanensis) protein is Endoribonuclease YbeY.